Consider the following 58-residue polypeptide: Small ribosomal subunit protein bS21 (58 aa).

This sequence belongs to the bacterial ribosomal protein bS21 family.

The polypeptide is Small ribosomal subunit protein bS21 (Lactobacillus johnsonii (strain CNCM I-12250 / La1 / NCC 533)).